The primary structure comprises 582 residues: Proline--tRNA ligase (582 aa).

It belongs to the class-II aminoacyl-tRNA synthetase family. ProS type 1 subfamily. Homodimer.

The protein localises to the cytoplasm. It catalyses the reaction tRNA(Pro) + L-proline + ATP = L-prolyl-tRNA(Pro) + AMP + diphosphate. Its function is as follows. Catalyzes the attachment of proline to tRNA(Pro) in a two-step reaction: proline is first activated by ATP to form Pro-AMP and then transferred to the acceptor end of tRNA(Pro). As ProRS can inadvertently accommodate and process non-cognate amino acids such as alanine and cysteine, to avoid such errors it has two additional distinct editing activities against alanine. One activity is designated as 'pretransfer' editing and involves the tRNA(Pro)-independent hydrolysis of activated Ala-AMP. The other activity is designated 'posttransfer' editing and involves deacylation of mischarged Ala-tRNA(Pro). The misacylated Cys-tRNA(Pro) is not edited by ProRS. In Mycobacterium bovis (strain ATCC BAA-935 / AF2122/97), this protein is Proline--tRNA ligase.